A 240-amino-acid polypeptide reads, in one-letter code: uncharacterized protein (240 aa).

Residues 1–18 (MTRYTYLFILQIISCSFA) form the signal peptide. A glycan (N-linked (GlcNAc...) asparagine) is linked at asparagine 127. A helical membrane pass occupies residues 215 to 235 (GFISSSQLPQFVYLIVFTIIG).

Its subcellular location is the membrane. This is an uncharacterized protein from Caenorhabditis elegans.